The primary structure comprises 221 residues: Urease accessory protein UreE (221 aa).

A compositionally biased stretch (basic and acidic residues) spans 171-180; the sequence is HHGHDHDHGH. The disordered stretch occupies residues 171 to 221; it reads HHGHDHDHGHSHSHSHSHSHSHSHSHDHDHDHDHEHDVKGHVHGPGCGHKH. Basic residues predominate over residues 181–193; sequence SHSHSHSHSHSHS. The span at 194–210 shows a compositional bias: basic and acidic residues; that stretch reads HSHDHDHDHDHEHDVKG.

This sequence belongs to the UreE family.

It is found in the cytoplasm. Involved in urease metallocenter assembly. Binds nickel. Probably functions as a nickel donor during metallocenter assembly. The polypeptide is Urease accessory protein UreE (Cupriavidus pinatubonensis (strain JMP 134 / LMG 1197) (Cupriavidus necator (strain JMP 134))).